A 323-amino-acid polypeptide reads, in one-letter code: Transaldolase (323 aa).

K133 acts as the Schiff-base intermediate with substrate in catalysis.

The protein belongs to the transaldolase family. Type 1 subfamily. Monomer.

The catalysed reaction is D-sedoheptulose 7-phosphate + D-glyceraldehyde 3-phosphate = D-erythrose 4-phosphate + beta-D-fructose 6-phosphate. The protein operates within carbohydrate degradation; pentose phosphate pathway; D-glyceraldehyde 3-phosphate and beta-D-fructose 6-phosphate from D-ribose 5-phosphate and D-xylulose 5-phosphate (non-oxidative stage): step 2/3. Functionally, important for the balance of metabolites in the pentose-phosphate pathway. Involved in xylose fermentation to ethanol. The chain is Transaldolase from Gibberella intermedia (Bulb rot disease fungus).